A 299-amino-acid polypeptide reads, in one-letter code: Non-structural protein V (299 aa).

Disordered regions lie at residues 30–101 (QEVS…EEDT) and 128–163 (SLMVPAGPPSNRGFEGREGSLDDSIEDSSEDYSEGN). Over residues 79–99 (EDQRGREDNTAPVEAKDRIEE) the composition is skewed to basic and acidic residues. Residues 148-160 (LDDSIEDSSEDYS) are compositionally biased toward acidic residues. Positions 232, 251, 255, 267, 269, 272, 276, and 279 each coordinate Zn(2+).

Functionally, blocks host interferon signaling. The protein is Non-structural protein V (P/V) of Phocidae (true seals).